We begin with the raw amino-acid sequence, 287 residues long: tRNA-cytidine(32) 2-sulfurtransferase (287 aa).

The PP-loop motif motif lies at 58–63; sequence SGGKDS. Residues Cys133, Cys136, and Cys224 each coordinate [4Fe-4S] cluster.

The protein belongs to the TtcA family. In terms of assembly, homodimer. Requires Mg(2+) as cofactor. It depends on [4Fe-4S] cluster as a cofactor.

The protein localises to the cytoplasm. It catalyses the reaction cytidine(32) in tRNA + S-sulfanyl-L-cysteinyl-[cysteine desulfurase] + AH2 + ATP = 2-thiocytidine(32) in tRNA + L-cysteinyl-[cysteine desulfurase] + A + AMP + diphosphate + H(+). The protein operates within tRNA modification. In terms of biological role, catalyzes the ATP-dependent 2-thiolation of cytidine in position 32 of tRNA, to form 2-thiocytidine (s(2)C32). The sulfur atoms are provided by the cysteine/cysteine desulfurase (IscS) system. This Dinoroseobacter shibae (strain DSM 16493 / NCIMB 14021 / DFL 12) protein is tRNA-cytidine(32) 2-sulfurtransferase.